The chain runs to 386 residues: Lipoyl synthase, mitochondrial (386 aa).

The transit peptide at 1–21 (MISRNSILLRRLYPTTIIRTL) directs the protein to the mitochondrion. Residues Cys-107, Cys-112, Cys-118, Cys-137, Cys-141, Cys-144, and Ser-352 each contribute to the [4Fe-4S] cluster site. The region spanning 122-341 (KKSEATATIM…RDTALDMGFL (220 aa)) is the Radical SAM core domain.

This sequence belongs to the radical SAM superfamily. Lipoyl synthase family. The cofactor is [4Fe-4S] cluster.

Its subcellular location is the mitochondrion. It carries out the reaction [[Fe-S] cluster scaffold protein carrying a second [4Fe-4S](2+) cluster] + N(6)-octanoyl-L-lysyl-[protein] + 2 oxidized [2Fe-2S]-[ferredoxin] + 2 S-adenosyl-L-methionine + 4 H(+) = [[Fe-S] cluster scaffold protein] + N(6)-[(R)-dihydrolipoyl]-L-lysyl-[protein] + 4 Fe(3+) + 2 hydrogen sulfide + 2 5'-deoxyadenosine + 2 L-methionine + 2 reduced [2Fe-2S]-[ferredoxin]. It participates in protein modification; protein lipoylation via endogenous pathway; protein N(6)-(lipoyl)lysine from octanoyl-[acyl-carrier-protein]: step 2/2. Its function is as follows. Catalyzes the radical-mediated insertion of two sulfur atoms into the C-6 and C-8 positions of the octanoyl moiety bound to the lipoyl domains of lipoate-dependent enzymes, thereby converting the octanoylated domains into lipoylated derivatives. The chain is Lipoyl synthase, mitochondrial (LAB5) from Candida albicans (strain SC5314 / ATCC MYA-2876) (Yeast).